The following is a 596-amino-acid chain: Elongation factor 4 (596 aa).

The tr-type G domain maps to 2–184 (KHIRNFSIIA…VIVAKIPPPE (183 aa)). GTP contacts are provided by residues 14–19 (DHGKST) and 131–134 (NKID).

This sequence belongs to the TRAFAC class translation factor GTPase superfamily. Classic translation factor GTPase family. LepA subfamily.

It is found in the cell inner membrane. It carries out the reaction GTP + H2O = GDP + phosphate + H(+). In terms of biological role, required for accurate and efficient protein synthesis under certain stress conditions. May act as a fidelity factor of the translation reaction, by catalyzing a one-codon backward translocation of tRNAs on improperly translocated ribosomes. Back-translocation proceeds from a post-translocation (POST) complex to a pre-translocation (PRE) complex, thus giving elongation factor G a second chance to translocate the tRNAs correctly. Binds to ribosomes in a GTP-dependent manner. The sequence is that of Elongation factor 4 from Shewanella putrefaciens (strain CN-32 / ATCC BAA-453).